Here is a 174-residue protein sequence, read N- to C-terminus: Ribosome maturation factor RimM (174 aa).

The 74-residue stretch at 101–174 (AGEFYLADLC…IELLQRWILE (74 aa)) folds into the PRC barrel domain.

Belongs to the RimM family. As to quaternary structure, binds ribosomal protein uS19.

The protein localises to the cytoplasm. An accessory protein needed during the final step in the assembly of 30S ribosomal subunit, possibly for assembly of the head region. Essential for efficient processing of 16S rRNA. May be needed both before and after RbfA during the maturation of 16S rRNA. It has affinity for free ribosomal 30S subunits but not for 70S ribosomes. This is Ribosome maturation factor RimM from Treponema pallidum (strain Nichols).